An 89-amino-acid chain; its full sequence is ATP synthase subunit c, sodium ion specific (89 aa).

Transmembrane regions (helical) follow at residues 9 to 29 (VVLA…IGPG) and 68 to 88 (GIYS…VGLL).

It belongs to the ATPase C chain family. F-type ATPases have 2 components, F(1) - the catalytic core - and F(0) - the membrane sodium channel. F(1) has five subunits: alpha(3), beta(3), gamma(1), delta(1), epsilon(1). F(0) has three main subunits: a(1), b(2) and c(10-14). The alpha and beta chains form an alternating ring which encloses part of the gamma chain. F(1) is attached to F(0) by a central stalk formed by the gamma and epsilon chains, while a peripheral stalk is formed by the delta and b chains.

The protein resides in the cell membrane. Functionally, f(1)F(0) ATP synthase produces ATP from ADP in the presence of a proton or sodium gradient. F-type ATPases consist of two structural domains, F(1) containing the extramembraneous catalytic core and F(0) containing the membrane sodium channel, linked together by a central stalk and a peripheral stalk. During catalysis, ATP synthesis in the catalytic domain of F(1) is coupled via a rotary mechanism of the central stalk subunits to sodium translocation. Key component of the F(0) channel; it plays a direct role in translocation across the membrane. A homomeric c-ring of between 10-14 subunits forms the central stalk rotor element with the F(1) delta and epsilon subunits. In Propionigenium modestum, this protein is ATP synthase subunit c, sodium ion specific (atpE).